The sequence spans 353 residues: Guanine nucleotide-binding protein alpha-1 subunit (353 aa).

Residues 1-26 are disordered; that stretch reads MGCGMSTEEKEGKARNEEIENQLKRD. Gly2 carries N-myristoyl glycine lipidation. Cys3 carries S-palmitoyl cysteine lipidation. The segment covering 7–26 has biased composition (basic and acidic residues); the sequence is TEEKEGKARNEEIENQLKRD. A G-alpha domain is found at 32 to 353; it reads NEIKMLLLGA…QENLRLCGLI (322 aa). Positions 35-48 are G1 motif; that stretch reads KMLLLGAGESGKST. Positions 43, 44, 45, 46, 47, 48, 150, 175, 181, 203, 269, 270, 272, and 325 each coordinate GTP. Ser47 lines the Mg(2+) pocket. The segment at 173-181 is G2 motif; that stretch reads DVLRSRVKT. Thr181 contributes to the Mg(2+) binding site. Positions 196–205 are G3 motif; it reads YRMFDVGGQR. The G4 motif stretch occupies residues 265-272; it reads ILFLNKID. A G5 motif region spans residues 323–328; that stretch reads TCATDT.

It belongs to the G-alpha family. G(q) subfamily. In terms of assembly, g proteins are composed of 3 units; alpha, beta and gamma. The alpha chain contains the guanine nucleotide binding site. The cofactor is Mg(2+).

Its function is as follows. Guanine nucleotide-binding proteins (G proteins) are involved as modulators or transducers in various transmembrane signaling systems. In Neurospora crassa (strain ATCC 24698 / 74-OR23-1A / CBS 708.71 / DSM 1257 / FGSC 987), this protein is Guanine nucleotide-binding protein alpha-1 subunit (gna-1).